Here is a 329-residue protein sequence, read N- to C-terminus: 4-hydroxythreonine-4-phosphate dehydrogenase (329 aa).

Substrate-binding residues include H136 and T137. Positions 166, 211, and 266 each coordinate a divalent metal cation. Residues K274, N283, and R292 each coordinate substrate.

It belongs to the PdxA family. In terms of assembly, homodimer. It depends on Zn(2+) as a cofactor. The cofactor is Mg(2+). Co(2+) is required as a cofactor.

The protein localises to the cytoplasm. The enzyme catalyses 4-(phosphooxy)-L-threonine + NAD(+) = 3-amino-2-oxopropyl phosphate + CO2 + NADH. Its pathway is cofactor biosynthesis; pyridoxine 5'-phosphate biosynthesis; pyridoxine 5'-phosphate from D-erythrose 4-phosphate: step 4/5. Catalyzes the NAD(P)-dependent oxidation of 4-(phosphooxy)-L-threonine (HTP) into 2-amino-3-oxo-4-(phosphooxy)butyric acid which spontaneously decarboxylates to form 3-amino-2-oxopropyl phosphate (AHAP). In Shigella sonnei (strain Ss046), this protein is 4-hydroxythreonine-4-phosphate dehydrogenase.